Reading from the N-terminus, the 118-residue chain is Large ribosomal subunit protein uL18 (118 aa).

This sequence belongs to the universal ribosomal protein uL18 family. As to quaternary structure, part of the 50S ribosomal subunit; part of the 5S rRNA/L5/L18/L25 subcomplex. Contacts the 5S and 23S rRNAs.

This is one of the proteins that bind and probably mediate the attachment of the 5S RNA into the large ribosomal subunit, where it forms part of the central protuberance. The sequence is that of Large ribosomal subunit protein uL18 from Rickettsia bellii (strain OSU 85-389).